The primary structure comprises 805 residues: MSHEKNEASGYPEAQSWKSQEAMLGARTEVSRWRAVKNCLYRHLVKVLGEDWIFLLLLGALMALVSWAMDFIGSRGLRFYKYLFALVEGNIGLQYLVWVCYPLALILFSSLFCQIVSPQAVGSGIPELKTIIRGAVLHEYLTLRTFVAKTVGLTVALSAGFPLGKEGPFVHIASICATLLNQLLCFISGRREEPYYLRADILTVGCALGISCCFGTPLAGVLFSIEVTCSHFGVRSYWRGFLGGAFSAFIFRVLSVWVKDTVTLTALFKTNFRGDIPFDLQEMPAFAIIGIASGFFGALFVYLNRQIIVFMRKKNFVTKILKKQRLIYPAVVTFVLATLRFPPGVGQFFGAGLMPRETINSLFDNYTWTKTIDPRGLGNSAQWFIPHLNIFIVMALYFVMHFWMAALAVTMPVPCGAFVPVFNLGAVLGRFVGELMALLFPDGLVSNGNLYHILPGEYAVIGAAAMTGAVTHAVSTAVICFELTGQISHVLPMMVAVILANMVAQGLQPSLYDSIIQIKKLPYLPELSWSSANKYNIQVGDIMVRDVTSIASTSTYGDLLHVLRQTKLKFFPFVDTPDTNTLLGSIDRTEVEGLLQRRISAYRRQPAAAAEADEEGRNGETGASFTGEAESSFAYIDQEDAEGQQREGLEAVKVQTEDPRPPSPVPAEEPTQTSGIYQKKQKGTGQVASRFEEMLTLEEIYRWEQREKNVVVNFETCRIDQSPFQLVEGTSLQKTHTLFSLLGLDRAYVTSMGKLVGVVALAEIQAAIEGSYQKGFRLPPPLASFRDVKHARNSGRTATSNSSGK.

Topologically, residues 1–48 are cytoplasmic; sequence MSHEKNEASGYPEAQSWKSQEAMLGARTEVSRWRAVKNCLYRHLVKVL. Transmembrane regions (helical) follow at residues 49 to 86 and 93 to 116; these read GEDW…LFAL and LQYL…CQIV. The Selectivity filter part_1 motif lies at 122–126; the sequence is GSGIP. Ser123 contributes to the chloride binding site. Residues 125–132 constitute an intramembrane region (helical); it reads IPELKTII. The next 2 helical transmembrane spans lie at 141–159 and 166–184; these read LTLR…ALSA and EGPF…NQLL. The Selectivity filter part_2 signature appears at 164–168; sequence GKEGP. 2 consecutive intramembrane regions (helical) follow at residues 201–213 and 217–225; these read ILTV…ISCC and PLAGVLFSI. 3 consecutive transmembrane segments (helical) span residues 237–256, 283–311, and 320–339; these read YWRG…VLSV, MPAF…IVFM, and ILKK…LATL. Asn365 is a glycosylation site (N-linked (GlcNAc...) asparagine). A run of 2 helical transmembrane segments spans residues 388-408 and 416-439; these read LNIF…AALA and GAFV…MALL. Positions 416 to 420 match the Selectivity filter part_3 motif; sequence GAFVP. A chloride-binding site is contributed by Phe418. Residues 456–470 constitute an intramembrane region (helical); the sequence is GEYAVIGAAAMTGAV. The segment at residues 471–472 is an intramembrane region (note=Loop between two helices); the sequence is TH. The helical intramembrane region spans 473–484; the sequence is AVSTAVICFELT. Residues 485–489 constitute an intramembrane region (note=Loop between two helices); sequence GQISH. The chain crosses the membrane as a helical span at residues 490 to 507; sequence VLPMMVAVILANMVAQGL. Residues 508 to 805 are Cytoplasmic-facing; sequence QPSLYDSIIQ…RTATSNSSGK (298 aa). Tyr512 lines the chloride pocket. The CBS 1 domain maps to 543-601; the sequence is MVRDVTSIASTSTYGDLLHVLRQTKLKFFPFVDTPDTNTLLGSIDRTEVEGLLQRRISA. Disordered regions lie at residues 606 to 625 and 653 to 684; these read PAAA…GASF and KVQT…QKGT. The 58-residue stretch at 719-776 folds into the CBS 2 domain; the sequence is IDQSPFQLVEGTSLQKTHTLFSLLGLDRAYVTSMGKLVGVVALAEIQAAIEGSYQKGF.

The protein belongs to the chloride channel (TC 2.A.49) family. ClC-0 subfamily. As to quaternary structure, homodimer. Each subunit contains a channel ('Double barreled channel').

Its subcellular location is the membrane. Its function is as follows. Voltage-gated chloride channel. This channel is thought to ensure the high conductance of the non-innervated membrane of the electrocyte necessary for efficient current generation caused by sodium influx through the acetylcholine receptor at the innervated membrane. The sequence is that of Chloride channel protein from Torpedo marmorata (Marbled electric ray).